Reading from the N-terminus, the 225-residue chain is UPF0758 protein XOO0462 (225 aa).

The 123-residue stretch at 102–224 (ALSDPPSVGR…PVSLAERGWL (123 aa)) folds into the MPN domain. His-173, His-175, and Asp-186 together coordinate Zn(2+). A JAMM motif motif is present at residues 173–186 (HNHPSGNPEPSEAD).

This sequence belongs to the UPF0758 family.

This is UPF0758 protein XOO0462 from Xanthomonas oryzae pv. oryzae (strain MAFF 311018).